Consider the following 292-residue polypeptide: Elongation factor Ts (292 aa).

The involved in Mg(2+) ion dislocation from EF-Tu stretch occupies residues 80–83 (TDFV).

Belongs to the EF-Ts family.

The protein resides in the cytoplasm. Associates with the EF-Tu.GDP complex and induces the exchange of GDP to GTP. It remains bound to the aminoacyl-tRNA.EF-Tu.GTP complex up to the GTP hydrolysis stage on the ribosome. This Cupriavidus taiwanensis (strain DSM 17343 / BCRC 17206 / CCUG 44338 / CIP 107171 / LMG 19424 / R1) (Ralstonia taiwanensis (strain LMG 19424)) protein is Elongation factor Ts.